Consider the following 193-residue polypeptide: Ion-translocating oxidoreductase complex subunit A (193 aa).

6 helical membrane passes run 5 to 25, 39 to 59, 72 to 92, 102 to 122, 134 to 154, and 171 to 191; these read ILLIISTALINNFVLVKFLGL, IGMGLATMFVLTVASLCAYLV, LRTLIFILVIAVVVQFTEMVI, LLGIFLPLITTNCAVLGVALL, VIYGFSASLGFSLVLVLFAAL, and SIALITAGLMSLAFMGFSGLV.

Belongs to the NqrDE/RnfAE family. The complex is composed of six subunits: RnfA, RnfB, RnfC, RnfD, RnfE and RnfG.

It localises to the cell inner membrane. In terms of biological role, part of a membrane-bound complex that couples electron transfer with translocation of ions across the membrane. In Histophilus somni (strain 2336) (Haemophilus somnus), this protein is Ion-translocating oxidoreductase complex subunit A.